A 317-amino-acid chain; its full sequence is Tyrosine--tRNA ligase (317 aa).

Position 32 (Tyr32) interacts with L-tyrosine. The 'HIGH' region signature appears at 37–45; it reads PSGEIHLGH. Residues Tyr152, Gln156, Asp159, and Gln174 each coordinate L-tyrosine. Positions 208–212 match the 'KMSKS' region motif; it reads KMSSS. Residue Ser211 participates in ATP binding.

This sequence belongs to the class-I aminoacyl-tRNA synthetase family. TyrS type 3 subfamily. In terms of assembly, homodimer.

Its subcellular location is the cytoplasm. It carries out the reaction tRNA(Tyr) + L-tyrosine + ATP = L-tyrosyl-tRNA(Tyr) + AMP + diphosphate + H(+). Its function is as follows. Catalyzes the attachment of tyrosine to tRNA(Tyr) in a two-step reaction: tyrosine is first activated by ATP to form Tyr-AMP and then transferred to the acceptor end of tRNA(Tyr). This Methanocorpusculum labreanum (strain ATCC 43576 / DSM 4855 / Z) protein is Tyrosine--tRNA ligase.